The primary structure comprises 198 residues: Pyridoxal 5'-phosphate synthase subunit PdxT (198 aa).

L-glutamine is bound at residue 52 to 54 (GES). Catalysis depends on C84, which acts as the Nucleophile. Residues R115 and 142-143 (IR) contribute to the L-glutamine site. Active-site charge relay system residues include H178 and E180.

It belongs to the glutaminase PdxT/SNO family. As to quaternary structure, in the presence of PdxS, forms a dodecamer of heterodimers. Only shows activity in the heterodimer.

It carries out the reaction aldehydo-D-ribose 5-phosphate + D-glyceraldehyde 3-phosphate + L-glutamine = pyridoxal 5'-phosphate + L-glutamate + phosphate + 3 H2O + H(+). The catalysed reaction is L-glutamine + H2O = L-glutamate + NH4(+). The protein operates within cofactor biosynthesis; pyridoxal 5'-phosphate biosynthesis. Catalyzes the hydrolysis of glutamine to glutamate and ammonia as part of the biosynthesis of pyridoxal 5'-phosphate. The resulting ammonia molecule is channeled to the active site of PdxS. This chain is Pyridoxal 5'-phosphate synthase subunit PdxT, found in Archaeoglobus fulgidus (strain ATCC 49558 / DSM 4304 / JCM 9628 / NBRC 100126 / VC-16).